Here is a 549-residue protein sequence, read N- to C-terminus: Probable protein kinase UbiB (549 aa).

A Protein kinase domain is found at Asp-123–Leu-501. ATP-binding positions include Leu-129–Val-137 and Lys-152. Residue Asp-287 is the Proton acceptor of the active site. The next 2 helical transmembrane spans lie at Ser-498 to Gln-518 and Ala-520 to Trp-540.

The protein belongs to the ABC1 family. UbiB subfamily.

It is found in the cell inner membrane. It participates in cofactor biosynthesis; ubiquinone biosynthesis [regulation]. Its function is as follows. Is probably a protein kinase regulator of UbiI activity which is involved in aerobic coenzyme Q (ubiquinone) biosynthesis. This is Probable protein kinase UbiB from Shewanella sp. (strain MR-7).